The following is a 112-amino-acid chain: Head virion protein G6P (112 aa).

Helical transmembrane passes span 3-23 (VLLG…TLFG), 36-56 (IAIA…ILVG), and 80-100 (NALP…IFDV).

The protein belongs to the inovirus G6P protein family. In terms of assembly, interacts with G3P; this interaction is required for proper integration of G3P and G6P into the virion.

The protein localises to the virion. The protein resides in the host membrane. Functionally, plays essential roles both in the entry of the viral genome into the bacterial host and in budding process. The formation of the G3P-G6P complex termed adsorption complex is essential for correct termination of filamentous phage assembly. The protein is Head virion protein G6P (VI) of Escherichia coli (Bacteriophage f1).